The following is a 45-amino-acid chain: Large ribosomal subunit protein bL34 (45 aa).

Residues 1–45 are disordered; that stretch reads MTKRTFQPNNRRRARKHGFRARMRTRAGRAILSARRGKNRAELSA. The segment covering 10 to 27 has biased composition (basic residues); the sequence is NRRRARKHGFRARMRTRA.

The protein belongs to the bacterial ribosomal protein bL34 family.

This is Large ribosomal subunit protein bL34 from Micrococcus luteus (strain ATCC 4698 / DSM 20030 / JCM 1464 / CCM 169 / CCUG 5858 / IAM 1056 / NBRC 3333 / NCIMB 9278 / NCTC 2665 / VKM Ac-2230) (Micrococcus lysodeikticus).